Here is a 1307-residue protein sequence, read N- to C-terminus: CRISPR-associated endonuclease Cas12a (1307 aa).

The WED-I (OBD-I) stretch occupies residues 1–35; the sequence is MTQFEGFTNLYQVSKTLRFELIPQGKTLKHIQEQG. The interval 36-320 is REC1 (helical-I); the sequence is FIEEDKARND…SDRNTLSFIL (285 aa). Position 47–51 (47–51) interacts with crRNA; it reads YKELK. Residues 74–106 are a coiled coil; that stretch reads ENLSAAIDSYRKEKTEETRNALIEEQATYRNAI. CrRNA contacts are provided by residues 175 to 176 and 307 to 310; these read NR and KQIL. Residues 321–526 form a WED-II (helical-II) region; the sequence is EEFKSDEEVI…ARNYATKKPY (206 aa). The WED-II (OBD-I) stretch occupies residues 527–598; sequence SVEKFKLNFQ…GFDKMYYDYF (72 aa). Residues 599 to 607 constitute a DNA-binding region (PAM-binding on target DNA); sequence PDAAKMIPK. Residues 599–718 are PI (LHD); that stretch reads PDAAKMIPKC…EYYAELNPLL (120 aa). The interval 719–884 is WED-III (OBD-III); that stretch reads YHISFQRIAE…ITLNYQAANS (166 aa). 752 to 761 serves as a coordination point for crRNA; sequence KGHHGKPNLH. A DNA-binding region (target DNA) is located at residues 780-783; sequence KLNG. The For pre-crRNA processing role is filled by H800. 806 to 808 is a crRNA binding site; sequence MLN. Residues K809 and K860 each act as for pre-crRNA processing in the active site. Residues 885–940 form a ruvC-I region; that stretch reads PSKFNQRVNAYLKEHPETPIIGIDRGERNLIYITVIDSTGKILEQRSLNTIQQFDY. Catalysis depends on D908, which acts as the For DNase activity of RuvC domain. The bridge helix stretch occupies residues 941–957; the sequence is QKKLDNREKERVAARQA. A DNA-binding region (target DNA) is located at residues 951–968; that stretch reads RVAARQAWSVVGTIKDLK. The segment at 958–1066 is ruvC-II; the sequence is WSVVGTIKDL…TQSGFLFYVP (109 aa). The For DNase activity of RuvC domain role is filled by E993. The target DNA DNA-binding region spans 1051 to 1053; the sequence is SFA. A nuclease domain region spans residues 1067–1262; the sequence is APYTSKIDPL…FQNPEWPMDA (196 aa). Catalysis depends on R1226, which acts as the For DNase activity of nuclease domain. D1263 acts as the For DNase activity of RuvC domain in catalysis. A ruvC-III region spans residues 1263-1307; the sequence is DANGAYHIALKGQLLLNHLKESKDLKLQNGISNQDWLAYIQELRN.

This sequence belongs to the CRISPR-associated endonuclease Cas12a family. In terms of assembly, monomer. The cofactor is Mg(2+).

The catalysed reaction is Endonucleolytic cleavage to 5'-phosphodinucleotide and 5'-phosphooligonucleotide end-products.. It catalyses the reaction RNA = a 5'-hydroxy-ribonucleotide + n nucleoside-2',3'-cyclophosphates.. Its function is as follows. CRISPR (clustered regularly interspaced short palindromic repeat), is an adaptive immune system that provides protection against mobile genetic elements (viruses, transposable elements and conjugative plasmids). CRISPR clusters contain sequences complementary to antecedent mobile elements and target invading nucleic acids. CRISPR clusters are transcribed and processed into CRISPR RNA (crRNA). Recognizes a short motif in the CRISPR repeat sequences (the 5' PAM or protospacer adjacent motif, TTTN in this organism) to help distinguish self versus nonself, as targets within the bacterial CRISPR locus do not have PAMs. Has dsDNA endonuclease activity, results in staggered 4-base 5' overhangs 19 and 22 bases downstream of the PAM on the non-targeted and targeted strand respectively. Non-target strand cleavage by the RuvC domain is probably a prerequisite of target strand cleavage by the Nuc domain. Protects E.coli against plasmids and bacteriophage M13mp18, phage T4 with hydroxymethyl or unmodified (but not glycosylated) cytosines and to a lesser extent against lambda and VpaE1 phage. In this CRISPR system correct processing of pre-crRNA requires only this protein and the CRISPR locus. This is CRISPR-associated endonuclease Cas12a from Acidaminococcus sp. (strain BV3L6).